Reading from the N-terminus, the 872-residue chain is Alanine--tRNA ligase (872 aa).

His-563, His-567, Cys-665, and His-669 together coordinate Zn(2+).

It belongs to the class-II aminoacyl-tRNA synthetase family. The cofactor is Zn(2+).

The protein resides in the cytoplasm. It catalyses the reaction tRNA(Ala) + L-alanine + ATP = L-alanyl-tRNA(Ala) + AMP + diphosphate. Catalyzes the attachment of alanine to tRNA(Ala) in a two-step reaction: alanine is first activated by ATP to form Ala-AMP and then transferred to the acceptor end of tRNA(Ala). Also edits incorrectly charged Ser-tRNA(Ala) and Gly-tRNA(Ala) via its editing domain. This Bacteroides fragilis (strain YCH46) protein is Alanine--tRNA ligase.